A 719-amino-acid chain; its full sequence is Potassium channel KOR2 (719 aa).

Over 1–63 (MAEEYELNEI…VIHPNGRWYR (63 aa)) the chain is Cytoplasmic. The chain crosses the membrane as a helical span at residues 64–84 (IWANMMFLWSIYSTFFTPFEF). Topologically, residues 85-93 (SFFRGLPDQ) are extracellular. A helical membrane pass occupies residues 94-114 (LLDLECVQLVFLADVAVHFFL). Over 115 to 137 (AYRDPHTYRMVHDKRHIALRYIK) the chain is Cytoplasmic. Residues 138–158 (GSFALDVLGCFPWDAIYKVTG) traverse the membrane as a helical segment. Over 159 to 164 (RVEAVR) the chain is Extracellular. Residues 165–185 (WLVWVRLYRGRKVMAFFKRVE) form a helical; Voltage-sensor membrane-spanning segment. Residues 186–199 (KDIRVSYLLTRIVK) are Cytoplasmic-facing. The chain crosses the membrane as a helical span at residues 200–220 (LITVELYCTHTAACGFYYLAT). Residues 221–255 (TLPPAREGGTWIGSLSLGDARYINFREVDLLTRYV) are Extracellular-facing. Positions 256–275 (TSLYLAIVTMATVGYGDIHA) form an intramembrane region, pore-forming. At 276 to 285 (VNTREMAFTV) the chain is on the extracellular side. The helical transmembrane segment at 286-306 (VYISFSIVLSAYLIGNMTALI) threads the bilayer. Residues 307-719 (VKGSRTERFR…LEQARTVATN (413 aa)) are Cytoplasmic-facing. 383–503 (LFRGCSDDFL…SQILSNLLKG (121 aa)) contributes to the a nucleoside 3',5'-cyclic phosphate binding site. 5 ANK repeats span residues 523 to 556 (KQESELVLGVNNAAYHGDIFRLKSLISAGADPSK), 560 to 589 (DGRTALHIAALRGYENIVRFLIQRGANVNS), 593 to 622 (FGNSPLLQAVKSGHDRITSLLVEHGAILNL), 624 to 653 (DAGGYLCRVVRGGRIDLLKKLLRFGISPNC), and 657 to 686 (DQRTPLHIAAAEGLHLVASTLIESGADIQA).

It belongs to the potassium channel family. Plant (TC 1.A.1.4) subfamily.

It is found in the membrane. Functionally, probable outward-rectifying potassium channel. This is Potassium channel KOR2 from Oryza sativa subsp. japonica (Rice).